Here is a 53-residue protein sequence, read N- to C-terminus: ATP synthase F(0) complex subunit 8 (53 aa).

A helical transmembrane segment spans residues 8–24; it reads PWLTTFLIVWISLIVIL.

The protein belongs to the ATPase protein 8 family. Component of the ATP synthase complex composed at least of ATP5F1A/subunit alpha, ATP5F1B/subunit beta, ATP5MC1/subunit c (homooctomer), MT-ATP6/subunit a, MT-ATP8/subunit 8, ATP5ME/subunit e, ATP5MF/subunit f, ATP5MG/subunit g, ATP5MK/subunit k, ATP5MJ/subunit j, ATP5F1C/subunit gamma, ATP5F1D/subunit delta, ATP5F1E/subunit epsilon, ATP5PF/subunit F6, ATP5PB/subunit b, ATP5PD/subunit d, ATP5PO/subunit OSCP. ATP synthase complex consists of a soluble F(1) head domain (subunits alpha(3) and beta(3)) - the catalytic core - and a membrane F(0) domain - the membrane proton channel (subunits c, a, 8, e, f, g, k and j). These two domains are linked by a central stalk (subunits gamma, delta, and epsilon) rotating inside the F1 region and a stationary peripheral stalk (subunits F6, b, d, and OSCP).

It is found in the mitochondrion membrane. In terms of biological role, subunit 8, of the mitochondrial membrane ATP synthase complex (F(1)F(0) ATP synthase or Complex V) that produces ATP from ADP in the presence of a proton gradient across the membrane which is generated by electron transport complexes of the respiratory chain. ATP synthase complex consist of a soluble F(1) head domain - the catalytic core - and a membrane F(1) domain - the membrane proton channel. These two domains are linked by a central stalk rotating inside the F(1) region and a stationary peripheral stalk. During catalysis, ATP synthesis in the catalytic domain of F(1) is coupled via a rotary mechanism of the central stalk subunits to proton translocation. In vivo, can only synthesize ATP although its ATP hydrolase activity can be activated artificially in vitro. Part of the complex F(0) domain. This is ATP synthase F(0) complex subunit 8 from Alligator mississippiensis (American alligator).